Here is a 720-residue protein sequence, read N- to C-terminus: Chloroplastic group IIA intron splicing facilitator CRS1, chloroplastic (720 aa).

A chloroplast-targeting transit peptide spans Met-1–Ser-77. Residues Lys-131–Glu-159 are a coiled coil. CRM domains are found at residues Leu-205 to Asp-301 and Ala-359 to Asp-456. Coiled-coil stretches lie at residues Lys-447–Glu-477 and Arg-517–Leu-553. In terms of domain architecture, CRM 3 spans Glu-570–Leu-670.

In terms of assembly, homodimer. Interacts with RNA. Part of large ribonucleo-protein complexes that include group IIA introns and CRS1.

Its subcellular location is the plastid. It localises to the chloroplast stroma. Required for the splicing of group IIA introns in chloroplasts, by regulating the intron folding. Forms splicing particles with RNA. May also be involved in chloroplast protein translation. In Arabidopsis thaliana (Mouse-ear cress), this protein is Chloroplastic group IIA intron splicing facilitator CRS1, chloroplastic.